We begin with the raw amino-acid sequence, 387 residues long: 3-ketoacyl-CoA thiolase (387 aa).

Cys91 functions as the Acyl-thioester intermediate in the catalytic mechanism. Active-site proton acceptor residues include His343 and Cys373.

Belongs to the thiolase-like superfamily. Thiolase family. As to quaternary structure, heterotetramer of two alpha chains (FadB) and two beta chains (FadA).

It localises to the cytoplasm. The catalysed reaction is an acyl-CoA + acetyl-CoA = a 3-oxoacyl-CoA + CoA. It functions in the pathway lipid metabolism; fatty acid beta-oxidation. Functionally, catalyzes the final step of fatty acid oxidation in which acetyl-CoA is released and the CoA ester of a fatty acid two carbons shorter is formed. The protein is 3-ketoacyl-CoA thiolase of Escherichia coli O1:K1 / APEC.